The following is a 376-amino-acid chain: N-acetyldiaminopimelate deacetylase (376 aa).

D69 is a catalytic residue. Catalysis depends on E128, which acts as the Proton acceptor.

This sequence belongs to the peptidase M20A family. N-acetyldiaminopimelate deacetylase subfamily.

It carries out the reaction N-acetyl-(2S,6S)-2,6-diaminopimelate + H2O = (2S,6S)-2,6-diaminopimelate + acetate. It participates in amino-acid biosynthesis; L-lysine biosynthesis via DAP pathway; LL-2,6-diaminopimelate from (S)-tetrahydrodipicolinate (acetylase route): step 3/3. Catalyzes the conversion of N-acetyl-diaminopimelate to diaminopimelate and acetate. In Streptococcus pneumoniae (strain Taiwan19F-14), this protein is N-acetyldiaminopimelate deacetylase.